The chain runs to 237 residues: Prospore formation at selected spindle poles protein 1 (237 aa).

It is found in the nucleus. Its subcellular location is the cytoplasm. It localises to the cytoskeleton. The protein resides in the microtubule organizing center. The protein localises to the spindle pole body. Involved in the pathway that organizes the shaping and sizing of the prospore membrane (PSM) during sporulation. Required to localize MPC54 to all four spindle pole bodies, and localize DON1 and SPO14 to four prospore membranes. The chain is Prospore formation at selected spindle poles protein 1 (PFS1) from Saccharomyces cerevisiae (strain ATCC 204508 / S288c) (Baker's yeast).